Reading from the N-terminus, the 308-residue chain is Oxygen-dependent coproporphyrinogen-III oxidase (308 aa).

Substrate is bound at residue Ser-100. 2 residues coordinate a divalent metal cation: His-104 and His-114. His-114 serves as the catalytic Proton donor. 116-118 (NFR) is a binding site for substrate. 2 residues coordinate a divalent metal cation: His-153 and His-183. The important for dimerization stretch occupies residues 248-283 (YVEFNLVFDRGTIFGLQSGGRTESILSSMPPMATWK). 266-268 (GGR) serves as a coordination point for substrate.

It belongs to the aerobic coproporphyrinogen-III oxidase family. In terms of assembly, homodimer. Requires a divalent metal cation as cofactor.

It localises to the cytoplasm. It carries out the reaction coproporphyrinogen III + O2 + 2 H(+) = protoporphyrinogen IX + 2 CO2 + 2 H2O. It functions in the pathway porphyrin-containing compound metabolism; protoporphyrin-IX biosynthesis; protoporphyrinogen-IX from coproporphyrinogen-III (O2 route): step 1/1. Its function is as follows. Involved in the heme biosynthesis. Catalyzes the aerobic oxidative decarboxylation of propionate groups of rings A and B of coproporphyrinogen-III to yield the vinyl groups in protoporphyrinogen-IX. The sequence is that of Oxygen-dependent coproporphyrinogen-III oxidase from Francisella tularensis subsp. holarctica (strain LVS).